Here is a 228-residue protein sequence, read N- to C-terminus: Cytochrome c oxidase subunit 2 (228 aa).

Residues 1–14 (MANHSQLGFQDASS) lie on the Mitochondrial intermembrane side of the membrane. Residues 15–45 (PIMEELVEFHDHALIVALAICSLVLYLLAHM) traverse the membrane as a helical segment. Residues 46–58 (LMEKLSSNAVDAQ) lie on the Mitochondrial matrix side of the membrane. Residues 59–86 (EVELIWTILPAIVLVLLALPSLQILYMM) form a helical membrane-spanning segment. The Mitochondrial intermembrane portion of the chain corresponds to 87–228 (DEIDEPDLTL…EAWSSLLSSS (142 aa)). Residues His160, Cys195, Glu197, Cys199, His203, and Met206 each coordinate Cu cation. Glu197 contacts Mg(2+).

Belongs to the cytochrome c oxidase subunit 2 family. In terms of assembly, component of the cytochrome c oxidase (complex IV, CIV), a multisubunit enzyme composed of 14 subunits. The complex is composed of a catalytic core of 3 subunits MT-CO1, MT-CO2 and MT-CO3, encoded in the mitochondrial DNA, and 11 supernumerary subunits COX4I, COX5A, COX5B, COX6A, COX6B, COX6C, COX7A, COX7B, COX7C, COX8 and NDUFA4, which are encoded in the nuclear genome. The complex exists as a monomer or a dimer and forms supercomplexes (SCs) in the inner mitochondrial membrane with NADH-ubiquinone oxidoreductase (complex I, CI) and ubiquinol-cytochrome c oxidoreductase (cytochrome b-c1 complex, complex III, CIII), resulting in different assemblies (supercomplex SCI(1)III(2)IV(1) and megacomplex MCI(2)III(2)IV(2)). Found in a complex with TMEM177, COA6, COX18, COX20, SCO1 and SCO2. Interacts with TMEM177 in a COX20-dependent manner. Interacts with COX20. Interacts with COX16. Cu cation is required as a cofactor.

Its subcellular location is the mitochondrion inner membrane. It carries out the reaction 4 Fe(II)-[cytochrome c] + O2 + 8 H(+)(in) = 4 Fe(III)-[cytochrome c] + 2 H2O + 4 H(+)(out). Its function is as follows. Component of the cytochrome c oxidase, the last enzyme in the mitochondrial electron transport chain which drives oxidative phosphorylation. The respiratory chain contains 3 multisubunit complexes succinate dehydrogenase (complex II, CII), ubiquinol-cytochrome c oxidoreductase (cytochrome b-c1 complex, complex III, CIII) and cytochrome c oxidase (complex IV, CIV), that cooperate to transfer electrons derived from NADH and succinate to molecular oxygen, creating an electrochemical gradient over the inner membrane that drives transmembrane transport and the ATP synthase. Cytochrome c oxidase is the component of the respiratory chain that catalyzes the reduction of oxygen to water. Electrons originating from reduced cytochrome c in the intermembrane space (IMS) are transferred via the dinuclear copper A center (CU(A)) of subunit 2 and heme A of subunit 1 to the active site in subunit 1, a binuclear center (BNC) formed by heme A3 and copper B (CU(B)). The BNC reduces molecular oxygen to 2 water molecules using 4 electrons from cytochrome c in the IMS and 4 protons from the mitochondrial matrix. The chain is Cytochrome c oxidase subunit 2 (MT-CO2) from Anas platyrhynchos (Mallard).